The sequence spans 491 residues: Glutamate--tRNA ligase (491 aa).

A 'HIGH' region motif is present at residues 10–20 (PSPTGYLHIGG). Residues 243–247 (KISKR) carry the 'KMSKS' region motif. Lys-246 is an ATP binding site.

It belongs to the class-I aminoacyl-tRNA synthetase family. Glutamate--tRNA ligase type 1 subfamily. Monomer.

Its subcellular location is the cytoplasm. The catalysed reaction is tRNA(Glu) + L-glutamate + ATP = L-glutamyl-tRNA(Glu) + AMP + diphosphate. Functionally, catalyzes the attachment of glutamate to tRNA(Glu) in a two-step reaction: glutamate is first activated by ATP to form Glu-AMP and then transferred to the acceptor end of tRNA(Glu). The polypeptide is Glutamate--tRNA ligase (Desulfotalea psychrophila (strain LSv54 / DSM 12343)).